The primary structure comprises 499 residues: UDP-N-acetylmuramoyl-L-alanyl-D-glutamate--2,6-diaminopimelate ligase (499 aa).

UDP-N-acetyl-alpha-D-muramoyl-L-alanyl-D-glutamate is bound by residues leucine 30 and serine 32. 122–128 (GTNGKTT) contacts ATP. Residues 164–165 (TT), serine 191, glutamine 197, and arginine 199 each bind UDP-N-acetyl-alpha-D-muramoyl-L-alanyl-D-glutamate. An N6-carboxylysine modification is found at lysine 231. Residues arginine 397, 421–424 (DNPR), glycine 472, and glutamate 476 contribute to the meso-2,6-diaminopimelate site. Residues 421–424 (DNPR) carry the Meso-diaminopimelate recognition motif motif.

The protein belongs to the MurCDEF family. MurE subfamily. Mg(2+) serves as cofactor. Carboxylation is probably crucial for Mg(2+) binding and, consequently, for the gamma-phosphate positioning of ATP.

Its subcellular location is the cytoplasm. The catalysed reaction is UDP-N-acetyl-alpha-D-muramoyl-L-alanyl-D-glutamate + meso-2,6-diaminopimelate + ATP = UDP-N-acetyl-alpha-D-muramoyl-L-alanyl-gamma-D-glutamyl-meso-2,6-diaminopimelate + ADP + phosphate + H(+). It functions in the pathway cell wall biogenesis; peptidoglycan biosynthesis. Functionally, catalyzes the addition of meso-diaminopimelic acid to the nucleotide precursor UDP-N-acetylmuramoyl-L-alanyl-D-glutamate (UMAG) in the biosynthesis of bacterial cell-wall peptidoglycan. The sequence is that of UDP-N-acetylmuramoyl-L-alanyl-D-glutamate--2,6-diaminopimelate ligase from Blochmanniella floridana.